The chain runs to 247 residues: Carboxy-S-adenosyl-L-methionine synthase (247 aa).

Residues Y40, 65–67, 90–91, 122–123, N137, and R204 each bind S-adenosyl-L-methionine; these read GAS, DN, and DI.

Belongs to the class I-like SAM-binding methyltransferase superfamily. Cx-SAM synthase family. As to quaternary structure, homodimer.

The enzyme catalyses prephenate + S-adenosyl-L-methionine = carboxy-S-adenosyl-L-methionine + 3-phenylpyruvate + H2O. Functionally, catalyzes the conversion of S-adenosyl-L-methionine (SAM) to carboxy-S-adenosyl-L-methionine (Cx-SAM). This chain is Carboxy-S-adenosyl-L-methionine synthase, found in Pseudomonas fluorescens (strain Pf0-1).